A 560-amino-acid polypeptide reads, in one-letter code: Tudor and KH domain-containing protein (560 aa).

KH domains follow at residues 52–115 and 124–190; these read DIEI…KAAI and PVFE…KHLI. Glycyl lysine isopeptide (Lys-Gly) (interchain with G-Cter in ubiquitin) cross-links involve residues Lys65, Lys76, Lys110, Lys112, Lys152, Lys175, Lys181, Lys187, and Lys193. The segment at 211–230 is disordered; sequence RVPRKQPISVRREEVTEPGG. Glycyl lysine isopeptide (Lys-Gly) (interchain with G-Cter in ubiquitin) cross-links involve residues Lys256 and Lys267. Positions 268–291 are disordered; the sequence is EGSWEKPNDDSFQNSGAQSSPETS. The segment covering 277 to 290 has biased composition (polar residues); the sequence is DSFQNSGAQSSPET. Ser278 is modified (phosphoserine). A Tudor domain is found at 353–412; it reads TVHVGDIVAAPLSTNGSWYRARVLGTLENGNLDLYFVDFGDNGDCALKDLRALRSDFLSL. Residues Lys479, Lys510, and Lys529 each participate in a glycyl lysine isopeptide (Lys-Gly) (interchain with G-Cter in ubiquitin) cross-link.

The protein belongs to the Tdrkh family. In terms of assembly, interacts with (symmetrically methylated) PIWIL1, PIWIL2 and PIWIL4. In terms of processing, ubiquitinated by PRKN during mitophagy, leading to its degradation and enhancement of mitophagy. Deubiquitinated by USP30. Highly expressed in testis, present at lower level in brain. Weakly or not expressed in other tissues (at protein level).

The protein localises to the cytoplasm. It is found in the mitochondrion. In terms of biological role, participates in the primary piRNA biogenesis pathway and is required during spermatogenesis to repress transposable elements and prevent their mobilization, which is essential for the germline integrity. The piRNA metabolic process mediates the repression of transposable elements during meiosis by forming complexes composed of piRNAs and Piwi proteins and govern the methylation and subsequent repression of transposons. Required for the final steps of primary piRNA biogenesis by participating in the processing of 31-37 nt intermediates into mature piRNAs. May act in pi-bodies and piP-bodies by transferring piRNA precursors or intermediates to or between these granules. The protein is Tudor and KH domain-containing protein (Tdrkh) of Mus musculus (Mouse).